The sequence spans 476 residues: ATP synthase subunit beta (476 aa).

Position 154–161 (154–161) interacts with ATP; sequence GGAGVGKT.

The protein belongs to the ATPase alpha/beta chains family. As to quaternary structure, F-type ATPases have 2 components, CF(1) - the catalytic core - and CF(0) - the membrane proton channel. CF(1) has five subunits: alpha(3), beta(3), gamma(1), delta(1), epsilon(1). CF(0) has three main subunits: a(1), b(2) and c(9-12). The alpha and beta chains form an alternating ring which encloses part of the gamma chain. CF(1) is attached to CF(0) by a central stalk formed by the gamma and epsilon chains, while a peripheral stalk is formed by the delta and b chains.

The protein resides in the cell inner membrane. It carries out the reaction ATP + H2O + 4 H(+)(in) = ADP + phosphate + 5 H(+)(out). Functionally, produces ATP from ADP in the presence of a proton gradient across the membrane. The catalytic sites are hosted primarily by the beta subunits. This is ATP synthase subunit beta from Nitrobacter hamburgensis (strain DSM 10229 / NCIMB 13809 / X14).